We begin with the raw amino-acid sequence, 246 residues long: MSFEVIPAVDMKGGKCVQLVQGVPGSEMISLDDPVEVALDWVSQGARTLHLIDLDGAIEGNRTNAPIIKKIVEKCKPQGIYIQVGGGIRSFEDAATLLDIGIDKVILSTAALKDPELIKKLSDEFGSEHINVALDSKNGKISIEGWTKESEHTAVEMGSQFEEKGAGSILFTNIDSEGLLNGVNPKPTEELVNAVTIPVIASGGVTTLEDIVTLKNTGAAGVVVGSALYKKRFTLTEAINIISDKN.

Catalysis depends on aspartate 10, which acts as the Proton acceptor. Aspartate 135 functions as the Proton donor in the catalytic mechanism.

The protein belongs to the HisA/HisF family.

It localises to the cytoplasm. It carries out the reaction 1-(5-phospho-beta-D-ribosyl)-5-[(5-phospho-beta-D-ribosylamino)methylideneamino]imidazole-4-carboxamide = 5-[(5-phospho-1-deoxy-D-ribulos-1-ylimino)methylamino]-1-(5-phospho-beta-D-ribosyl)imidazole-4-carboxamide. Its pathway is amino-acid biosynthesis; L-histidine biosynthesis; L-histidine from 5-phospho-alpha-D-ribose 1-diphosphate: step 4/9. This is 1-(5-phosphoribosyl)-5-[(5-phosphoribosylamino)methylideneamino] imidazole-4-carboxamide isomerase from Methanococcoides burtonii (strain DSM 6242 / NBRC 107633 / OCM 468 / ACE-M).